The chain runs to 643 residues: Transmembrane 9 superfamily member 4 (643 aa).

The signal sequence occupies residues 1–23 (MAAAMIWWPRFLLLLCLTCKGST). The Extracellular segment spans residues 24–282 (FYVPGVAPIN…TMSDVQIHWF (259 aa)). A helical transmembrane segment spans residues 283 to 303 (SIINSVVVVFFLSGILSMIII). Residues 304 to 347 (RTLRKDIANYNKEDDIEDTMEESGWKLVHGDVFRPPQYPMILSS) lie on the Cytoplasmic side of the membrane. Tyr-313 carries the post-translational modification Phosphotyrosine. Residues 348 to 368 (LLGSGIQLFCMILIVIFVAML) form a helical membrane-spanning segment. Over 369–377 (GMLSPSSRG) the chain is Extracellular. A helical transmembrane segment spans residues 378-398 (ALMTTACFLFMFMGVFGGFSA). The Cytoplasmic segment spans residues 399–417 (GRLYRTLKGHRWKKGAFCT). A helical membrane pass occupies residues 418–438 (ATLYPGVVFGICFVLNCFIWG). Topologically, residues 439–450 (KHSSGAVPFPTM) are extracellular. The chain crosses the membrane as a helical span at residues 451 to 471 (VALLCMWFGISLPLVYLGYYF). Over 472 to 502 (GFRKQPYDNPVRTNQIPRQIPEQRWYMNRFV) the chain is Cytoplasmic. Residues 503–523 (GILMAGILPFGAMFIELFFIF) form a helical membrane-spanning segment. Topologically, residues 524-536 (SAIWENQFYYLFG) are extracellular. The chain crosses the membrane as a helical span at residues 537–557 (FLFLVFIILVVSCSQISIVMV). At 558–571 (YFQLCAEDYRWWWR) the chain is on the cytoplasmic side. Residues 572–592 (NFLVSGGSAFYVLVYAIFYFV) form a helical membrane-spanning segment. Residues 593–599 (NKLDIVE) lie on the Extracellular side of the membrane. The helical transmembrane segment at 600–620 (FIPSLLYFGYTTLMVLSFWLL) threads the bilayer. Residues 621–643 (TGTIGFYAAYMFVRKIYAAVKID) are Cytoplasmic-facing.

The protein belongs to the nonaspanin (TM9SF) (TC 9.A.2) family.

The protein resides in the membrane. It localises to the golgi apparatus. It is found in the early endosome. Functionally, associates with proteins harboring glycine-rich transmembrane domains and ensures their efficient localization to the cell surface. In Mus musculus (Mouse), this protein is Transmembrane 9 superfamily member 4 (Tm9sf4).